Consider the following 256-residue polypeptide: Pimeloyl-[acyl-carrier protein] methyl ester esterase (256 aa).

Residues 15–242 (HLVLLHGWGL…AAHAPFISHP (228 aa)) form the AB hydrolase-1 domain. Residues W22, 82–83 (SL), and 143–147 (FLALQ) each bind substrate. S82 serves as the catalytic Nucleophile. Catalysis depends on residues D207 and H235. Substrate is bound at residue H235.

Belongs to the AB hydrolase superfamily. Carboxylesterase BioH family. Monomer.

Its subcellular location is the cytoplasm. It catalyses the reaction 6-carboxyhexanoyl-[ACP] methyl ester + H2O = 6-carboxyhexanoyl-[ACP] + methanol + H(+). It functions in the pathway cofactor biosynthesis; biotin biosynthesis. Its function is as follows. The physiological role of BioH is to remove the methyl group introduced by BioC when the pimeloyl moiety is complete. It allows to synthesize pimeloyl-ACP via the fatty acid synthetic pathway through the hydrolysis of the ester bonds of pimeloyl-ACP esters. This chain is Pimeloyl-[acyl-carrier protein] methyl ester esterase, found in Escherichia coli O127:H6 (strain E2348/69 / EPEC).